The following is a 343-amino-acid chain: MKMPSIIQIQFVALKRLLVETKEQMCFAVKSIFQRVFAWVMSLSLFSWFYVNLQNILIKALRVGPVPEHVSFIMDGNRRYAKSRRLPVKKGHEAGGLTLLTLLYICKRLGVKCVSAYAFSIENFNRPKEEVDTLMNLFTVKLDEFAKRAKDYKDPLYGSKIRIVGDQSLLSPEMRKKIKKVEEITQDGDDFTLFICFPYTSRNDMLHTIRDSVEDHLENKSPRINIRKFTNKMYMGFHSNKCELLIRTSGHRRLSDYMLWQVHENATIEFSDTLWPNFSFFAMYLMILKWSFFSTIQKYNEKNHSLFEKIHESVPSIFKKKKTAMSLYNFPNPPISVSVTGDE.

Belongs to the UPP synthase family. As to quaternary structure, forms an active dehydrodolichyl diphosphate synthase complex with NUS1. Mg(2+) serves as cofactor.

It is found in the lipid droplet. The enzyme catalyses n isopentenyl diphosphate + (2E,6E)-farnesyl diphosphate = a di-trans,poly-cis-polyprenyl diphosphate + n diphosphate. Its pathway is protein modification; protein glycosylation. Functionally, with NUS1, forms the dehydrodolichyl diphosphate synthase (DDS) complex, an essential component of the dolichol monophosphate (Dol-P) biosynthetic machinery. Adds multiple copies of isopentenyl pyrophosphate (IPP) to farnesyl pyrophosphate (FPP) to produce dehydrodolichyl diphosphate (Dedol-PP), a precursor of dolichol which is utilized as a sugar carrier in protein glycosylation in the endoplasmic reticulum (ER). In Saccharomyces cerevisiae (strain ATCC 204508 / S288c) (Baker's yeast), this protein is Dehydrodolichyl diphosphate synthase complex subunit SRT1.